Consider the following 1353-residue polypeptide: MEQNEFMEAIMYVNGVRRVLPDGLAHMTLLEYLRDLGLTGTKLGCGEGGCGSCTVMVSSYDRESKTCVHYAVNACLAPLYSVEGMHVISIEGVGHRKLGLHPLQESLASSHGSQCGFCTPGFVMSMYALLRSSKNSPSEEEIEECLAGNLCRCTGYRPIIDAFRVFAKSDDALYSGLSSLSLQDGSNICPSTGKPCSCGSKTTSEAATCNEDRFQSISYSDIDGAKYTDKELIFPPELLLRKLAPLKLGGNEGITWYRPVSLQNLLELKANFPDAKLLVGNTEVGIEMRLKRLQYPVLISAAQVPELNALNVNDNGIEVGSALRLSELLRLFRKVVKERPAHETSACKAFIEQLKWFAGTQIRNVACIGGNICTASPISDLNPLWMASRAEFRIINCNGDVRSIPAKDFFLGYRKVDMGSNEILLSVFLPWTRPLEYVKEFKQAHRRDDDIAIVNGGMRVFLEEKGQQLFVSDASIVYGGVAPLSLRARNTEELLIGKNWNKCLLQDALKVIQSDVLIKEGAPGGMVEFRKSLTLSFFFKFFLWVTHHVNNVNPTIETFPPSHMSAVQLVPRFSRIGKQDYETVKQGTSVGLPEVHLSARMQVTGEAEYTDDTPLPPCTLHAALVLSKVPHARILSVDDSAAKSSSGFVGLFLAKDVPGNNMIGPIVADEELFATDVVTCVGQVIGVLVADTHENAKTAARKVDVRYQELPAILSIKEAINAKSFHPNTERRLRKGDVELCFQSGQCDRIIEGEVQMGGQEHFYLEPNGSLVWTIDGGNEVHMISSTQAPQQHQKYVSHVLGLPMSKVVCKTKRLGGGFGGKETRSAFIAAAASVPSYLLNRPVKLILDRDVDMMITGHRHSFVGKYKVGFTNEGKILALDLEIYNNGGNSMDLSLSNLERAMFHSDNVYEIPHVRIVGNVCFTNFPSNTAFRGFGGPQGMLITENWIQRIAAELDKIPEEIKEMNFQVEGSITHYFQSLQHCTLHQLWKELKVSSNFLKTRREADEFNSHNRWKKRGVAMVPTKFGISFTTKFMNQAGALVHVYTDGTVLVTHGGVEMGQGLHTKVAQVAATAFNILLSSVFVSETSTDKVPNASPTAASASSDMYGAAVLDACEQIIARMEPVASKHNFNTFSELASACYFQRIDLSAHGFHIVPELEFDWVSGKGNAYRYYTYGAAFAEVEIDTLTGDFHTRKADIMLDLGYSLNPTIDIGQIEGAFVQGLGWVALEELKWGDAAHKWIKPGSLLTCGPGSYKIPSINDMPFQLNVSLLKGNPNAKAIHSSKAVGEPPFFLAASAFFAIKEAIKAARSEVGLTNWFPLETPATPERIRMACFDEFSAPFANSDFCPKLSV.

A 2Fe-2S ferredoxin-type domain is found at 7 to 93 (MEAIMYVNGV…GMHVISIEGV (87 aa)). Residues cysteine 45, cysteine 50, cysteine 53, cysteine 75, cysteine 115, cysteine 118, cysteine 151, and cysteine 153 each contribute to the [2Fe-2S] cluster site. The FAD-binding PCMH-type domain maps to 249–434 (GGNEGITWYR…LSVFLPWTRP (186 aa)). Residues 277 to 284 (LLVGNTEV), phenylalanine 357, 367 to 371 (CIGGN), aspartate 380, leucine 424, and lysine 442 each bind FAD. Positions 788 and 819 each coordinate Mo-molybdopterin. Substrate is bound by residues glutamate 823 and arginine 901. Arginine 933 serves as a coordination point for Mo-molybdopterin. Phenylalanine 935 and threonine 1031 together coordinate substrate. Alanine 1100 is a binding site for Mo-molybdopterin. Glutamate 1289 (proton acceptor) is an active-site residue.

This sequence belongs to the xanthine dehydrogenase family. In terms of assembly, homodimer. It depends on [2Fe-2S] cluster as a cofactor. Requires FAD as cofactor. The cofactor is Mo-molybdopterin. In terms of tissue distribution, expressed in roots, leaves, stems, flowers and siliques.

It catalyses the reaction xanthine + NAD(+) + H2O = urate + NADH + H(+). The enzyme catalyses hypoxanthine + NAD(+) + H2O = xanthine + NADH + H(+). Functionally, key enzyme involved in purine catabolism. Catalyzes the oxidation of hypoxanthine to xanthine and the oxidation of xanthine to urate. Regulates the level of ureides and plays a role during plant growth and development and senescence. The protein is Xanthine dehydrogenase 2 (XDH2) of Arabidopsis thaliana (Mouse-ear cress).